The sequence spans 752 residues: Complement C2 (752 aa).

Residues Met1–Ser20 form the signal peptide. Sushi domains follow at residues Pro22–Pro86, Val87–Asn146, and Gly149–Gln206. 6 disulfide bridges follow: Cys24/Cys64, Cys51/Cys84, Cys89/Cys131, Cys117/Cys144, Cys151/Cys191, and Cys177/Cys204. Asn29 carries an N-linked (GlcNAc...) asparagine glycan. Asn112 carries an N-linked (GlcNAc...) asparagine glycan. The VWFA domain occupies Asn254 to Met452. An MIDAS-like motif motif is present at residues Asp260–Ser264. Residues Ser262 and Ser264 each coordinate Mg(2+). Asn290 and Asn333 each carry an N-linked (GlcNAc...) asparagine glycan. Thr337 provides a ligand contact to Mg(2+). Cystine bridges form between Cys463/Cys581, Cys492/Cys508, and Cys584/Cys600. A Peptidase S1 domain is found at Gly464–Gly744. 2 N-linked (GlcNAc...) asparagine glycosylation sites follow: Asn467 and Asn471. Active-site charge relay system residues include His507 and Asp561. Asn621 and Asn651 each carry an N-linked (GlcNAc...) asparagine glycan. Cystine bridges form between Cys638-Cys665 and Cys675-Cys705. The Charge relay system role is filled by Ser679.

The protein belongs to the peptidase S1 family. In terms of assembly, serine protease component of the C3 convertase, also named C4bC2b, composed of the serine protease complement C2b and complement C4b. Serine protease component of the C5 convertase, also named C4bC2bC3b, composed of the serine protease complement C2b, complement C3b, as well as complement C4b. It depends on Mg(2+) as a cofactor. The cofactor is Mn(2+). Post-translationally, cleaved and activated by different proteases depending on the complement pathway to generate complement C2a and serine protease complement C2b chains. Cleaved and activated by C1S following activation by the classical complement system. Cleaved and activated by MASP2 following activation by the lectin complement system. Cleaved and activated by GZMK following activation by the GZMK complement system.

It localises to the secreted. The protein resides in the cell surface. It carries out the reaction Selective cleavage of Arg-|-Ser bond in complement component C3 alpha-chain to form C3a and C3b, and Arg-|-Xaa bond in complement component C5 alpha-chain to form C5a and C5b.. Functionally, precursor of the catalytic component of the C3 and C5 convertase complexes, which are part of the complement pathway, a cascade of proteins that leads to phagocytosis and breakdown of pathogens and signaling that strengthens the adaptive immune system. Component C2 is part of the classical, lectin and GZMK complement systems. Catalytic component of the complement C3 and C5 convertase complexes. Following complement activation, recruited to the surface of pathogens by complement C4b opsonin to form the C3 convertase, or C3b and C4b opsonins to form the C5 convertase. As part of the C3 convertase, cleaves and activate C3 into C3a anaphylatoxin and C3b opsonin, the next components of the complement pathways. As part of the C5 convertase, cleaves and activate C5 into C5a anaphylatoxin and C5b component of the membrane attack complex. The protein is Complement C2 of Pan troglodytes (Chimpanzee).